Here is a 1293-residue protein sequence, read N- to C-terminus: Phosphoribosylformylglycinamidine synthase (1293 aa).

Residues 308 to 319 and A675 contribute to the ATP site; that span reads GAATGAGGEIRD. Mg(2+) contacts are provided by D676, E715, N719, and D883. S885 contributes to the ATP binding site. Residues 1040–1293 enclose the Glutamine amidotransferase type-1 domain; the sequence is MAILREQGVN…MFRNARKFIG (254 aa). Residue C1133 is the Nucleophile of the active site. Residues H1258 and E1260 contribute to the active site.

It in the N-terminal section; belongs to the FGAMS family. As to quaternary structure, monomer.

It is found in the cytoplasm. It carries out the reaction N(2)-formyl-N(1)-(5-phospho-beta-D-ribosyl)glycinamide + L-glutamine + ATP + H2O = 2-formamido-N(1)-(5-O-phospho-beta-D-ribosyl)acetamidine + L-glutamate + ADP + phosphate + H(+). It functions in the pathway purine metabolism; IMP biosynthesis via de novo pathway; 5-amino-1-(5-phospho-D-ribosyl)imidazole from N(2)-formyl-N(1)-(5-phospho-D-ribosyl)glycinamide: step 1/2. Functionally, phosphoribosylformylglycinamidine synthase involved in the purines biosynthetic pathway. Catalyzes the ATP-dependent conversion of formylglycinamide ribonucleotide (FGAR) and glutamine to yield formylglycinamidine ribonucleotide (FGAM) and glutamate. The polypeptide is Phosphoribosylformylglycinamidine synthase (Methylobacillus flagellatus (strain ATCC 51484 / DSM 6875 / VKM B-1610 / KT)).